Here is a 492-residue protein sequence, read N- to C-terminus: Membrane-bound glycerophospholipid O-acyltransferase 1 (492 aa).

6 helical membrane-spanning segments follow: residues 33–53 (VNFV…RIYL), 69–89 (ILGI…LFVL), 125–145 (IYIF…MIVT), 179–199 (PSLL…AGPC), 237–257 (MGAV…FLTL), and 296–316 (YFAW…FNGM). Catalysis depends on residues Asn-349 and His-380. A run of 3 helical transmembrane segments spans residues 370-390 (VLTF…YFTF), 423-443 (VVTW…FVML), and 452-472 (YKSV…FLPI). At Ser-486 the chain carries Phosphoserine.

Belongs to the membrane-bound acyltransferase family. Highly expressed in stomach, epididymis, and colon.

Its subcellular location is the endoplasmic reticulum membrane. It carries out the reaction a 1-acyl-sn-glycero-3-phosphoethanolamine + an acyl-CoA = a 1,2-diacyl-sn-glycero-3-phosphoethanolamine + CoA. It catalyses the reaction a 1-acyl-sn-glycero-3-phospho-L-serine + an acyl-CoA = a 1,2-diacyl-sn-glycero-3-phospho-L-serine + CoA. The catalysed reaction is a 1-acyl-sn-glycero-3-phosphocholine + an acyl-CoA = a 1,2-diacyl-sn-glycero-3-phosphocholine + CoA. The enzyme catalyses a 1-O-(1Z-alkenyl)-sn-glycero-3-phosphoethanolamine + (9Z)-octadecenoyl-CoA = 1-O-(1Z)-alkenyl-2-(9Z)-octadecenoyl-sn-glycero-3-phosphoethanolamine + CoA. It carries out the reaction 1-octadecanoyl-sn-glycero-3-phosphoethanolamine + (9Z)-octadecenoyl-CoA = 1-octadecanoyl-2-(9Z-octadecenoyl)-sn-glycero-3-phosphoethanolamine + CoA. It catalyses the reaction 1-(9Z-octadecenoyl)-sn-glycero-3-phospho-L-serine + (9Z)-octadecenoyl-CoA = 1,2-di-(9Z)-octadecenoyl-sn-glycero-3-phospho-L-serine + CoA. The catalysed reaction is 1-(9Z-octadecenoyl)-sn-glycero-3-phosphoethanolamine + (9Z)-octadecenoyl-CoA = 1,2-di-(9Z-octadecenoyl)-sn-glycero-3-phosphoethanolamine + CoA. The enzyme catalyses 1-hexadecanoyl-sn-glycero-3-phosphoethanolamine + (9Z)-octadecenoyl-CoA = 1-hexadecanoyl-2-(9Z-octadecenoyl)-sn-glycero-3-phosphoethanolamine + CoA. It carries out the reaction 1-(10Z-heptadecenoyl)-sn-glycero-3-phosphoethanolamine + hexadecanoyl-CoA = 1-(10Z-heptadecenoyl)-2-hexadecanoyl-sn-glycero-3-phosphoethanolamine + CoA. It catalyses the reaction 1-(9Z-octadecenoyl)-sn-glycero-3-phospho-L-serine + octadecanoyl-CoA = 1-(9Z-octadecenoyl)-2-octadecanoyl-sn-glycero-3-phospho-L-serine + CoA. The catalysed reaction is 1-(9Z-octadecenoyl)-sn-glycero-3-phospho-L-serine + (9Z)-hexadecenoyl-CoA = 1-(9Z-octadecenoyl)-2-(9Z-hexadecenoyl)-sn-glycero-3-phospho-L-serine + CoA. The enzyme catalyses 1-(9Z-octadecenoyl)-sn-glycero-3-phospho-L-serine + (9Z,12Z)-octadecadienoyl-CoA = 1-(9Z-octadecenoyl)-2-(9Z,12Z-octadienoyl)-sn-glycero-3-phospho-L-serine + CoA. It carries out the reaction 1-hexadecanoyl-sn-glycero-3-phosphocholine + (9Z)-octadecenoyl-CoA = 1-hexadecanoyl-2-(9Z-octadecenoyl)-sn-glycero-3-phosphocholine + CoA. It catalyses the reaction 1-(10Z-heptadecenoyl)-sn-glycero-3-phosphoethanolamine + (9Z)-octadecenoyl-CoA = 1-(10Z-heptadecenoyl)-2-(9Z-octadecenoyl)-sn-glycero-3-phosphoethanolamine + CoA. It participates in lipid metabolism; phospholipid metabolism. Its function is as follows. Acyltransferase which catalyzes the transfer of an acyl group from an acyl-CoA towards a lysophospholipid producing a phospholipid and participates in the reacylation step of the phospholipid remodeling pathway also known as the Lands cycle. Acts on lysophosphatidylserine (1-acyl-2-hydroxy-sn-glycero-3-phospho-L-serine or LPS) and lysophosphatidylethanolamine (1-acyl-sn-glycero-3-phosphoethanolamine or LPE), and to a lesser extend lysophosphatidylcholine. Prefers oleoyl-CoA as the acyl donor and 1-oleoyl-LPE as acceptor. May play a role in neurite outgrowth during neuronal differentiation. In Mus musculus (Mouse), this protein is Membrane-bound glycerophospholipid O-acyltransferase 1.